Reading from the N-terminus, the 662-residue chain is Probable quinol oxidase subunit 1 (662 aa).

A run of 2 helical transmembrane segments spans residues 14–34 (WMIT…IAVI) and 58–78 (VMYL…ALLI). A Fe(II)-heme a-binding site is contributed by H102. Helical transmembrane passes span 103–123 (GVIM…NIVV), 140–160 (VSFW…IIGG), 187–207 (IAIQ…FVTI), 228–248 (FITT…LALM), 273–293 (FFWV…FGIY), 311–331 (MVWA…HHFF), 336–356 (GALI…PTGV), and 376–396 (MLFS…GVML). Cu cation contacts are provided by H279, Y283, H328, and H329. Residues 279 to 283 (HPEVY) constitute a cross-link (1'-histidyl-3'-tyrosine (His-Tyr)). Heme a3 is bound at residue H414. Transmembrane regions (helical) follow at residues 415-435 (FHYT…IFWY), 451-471 (CFWF…ILGL), 493-513 (ISTI…VSIV), 587-604 (PVGF…FFLI), and 608-627 (VIPA…YRSF). H416 contributes to the Fe(II)-heme a binding site.

This sequence belongs to the heme-copper respiratory oxidase family. Requires Cu cation as cofactor. It depends on ferriheme a as a cofactor. Heme A3. serves as cofactor.

It is found in the cell membrane. It catalyses the reaction 2 a quinol + O2 = 2 a quinone + 2 H2O. Its pathway is energy metabolism; oxidative phosphorylation. Functionally, catalyzes quinol oxidation with the concomitant reduction of oxygen to water. In Staphylococcus aureus (strain COL), this protein is Probable quinol oxidase subunit 1 (qoxB).